The sequence spans 342 residues: Flavanone 3-dioxygenase 2 (342 aa).

In terms of domain architecture, Fe2OG dioxygenase spans 193–293 (QEQHMAVNYY…RMSVASFLCP (101 aa)). Fe cation is bound by residues His217, Asp219, and His274. Arg284 is a 2-oxoglutarate binding site.

The protein belongs to the iron/ascorbate-dependent oxidoreductase family. Requires Fe(2+) as cofactor. L-ascorbate is required as a cofactor. Expressed in roots, leaves and stems. Expressed at low levels in seeds.

The enzyme catalyses a (2S)-flavan-4-one + 2-oxoglutarate + O2 = a (2R,3R)-dihydroflavonol + succinate + CO2. It participates in secondary metabolite biosynthesis; flavonoid biosynthesis. Its function is as follows. Catalyzes the 3-beta-hydroxylation of 2S-flavanones to 2R,3R-dihydroflavonols which are intermediates in the biosynthesis of flavonols, anthocyanidins, catechins and proanthocyanidins in plants. Converts (2S)-eriodictyol to (+)-taxifolin and (2S)-naringenin to (+)-(2R/3R)-dihydrokaempferol in vitro. This is Flavanone 3-dioxygenase 2 from Oryza sativa subsp. japonica (Rice).